Here is a 308-residue protein sequence, read N- to C-terminus: CMP-N-acetylneuraminate:beta-galactoside alpha-2,3-sialyltransferase (308 aa).

Catalysis depends on Asp-201, which acts as the Proton acceptor. CMP-N-acetyl-beta-neuraminate-binding positions include 221–225, 242–243, and 262–263; these read LPHPR, FE, and SS. The Proton donor role is filled by His-223.

Belongs to the glycosyltransferase 52 family. Divalent metal cations are not required for the alpha-2,3-sialyltransferase activity. is required as a cofactor.

In terms of biological role, catalyzes the transfer of sialic acid from the substrate CMP-N-acetylneuraminate to lactosyl lipids as preferred acceptor substrates in vitro, forming alpha-2,3-linked sialosides. Beta-1,4-linked galactosyl lipids are better substrates than beta-1,3-linked galactosyl lipids. The natural acceptor substrate may be cell surface oligosaccharides in lipooligosaccharide (LOS), whose sialylation has been demonstrated vital for the virulence of P.multocida. This Pasteurella multocida (strain Pm70) protein is CMP-N-acetylneuraminate:beta-galactoside alpha-2,3-sialyltransferase (lst).